The primary structure comprises 100 residues: Urease subunit gamma (100 aa).

This sequence belongs to the urease gamma subunit family. As to quaternary structure, heterotrimer of UreA (gamma), UreB (beta) and UreC (alpha) subunits. Three heterotrimers associate to form the active enzyme.

The protein resides in the cytoplasm. It catalyses the reaction urea + 2 H2O + H(+) = hydrogencarbonate + 2 NH4(+). The protein operates within nitrogen metabolism; urea degradation; CO(2) and NH(3) from urea (urease route): step 1/1. The polypeptide is Urease subunit gamma (Photorhabdus laumondii subsp. laumondii (strain DSM 15139 / CIP 105565 / TT01) (Photorhabdus luminescens subsp. laumondii)).